Here is a 179-residue protein sequence, read N- to C-terminus: ATP synthase subunit delta (179 aa).

This sequence belongs to the ATPase delta chain family. As to quaternary structure, F-type ATPases have 2 components, F(1) - the catalytic core - and F(0) - the membrane proton channel. F(1) has five subunits: alpha(3), beta(3), gamma(1), delta(1), epsilon(1). F(0) has three main subunits: a(1), b(2) and c(10-14). The alpha and beta chains form an alternating ring which encloses part of the gamma chain. F(1) is attached to F(0) by a central stalk formed by the gamma and epsilon chains, while a peripheral stalk is formed by the delta and b chains.

The protein resides in the cell inner membrane. In terms of biological role, f(1)F(0) ATP synthase produces ATP from ADP in the presence of a proton or sodium gradient. F-type ATPases consist of two structural domains, F(1) containing the extramembraneous catalytic core and F(0) containing the membrane proton channel, linked together by a central stalk and a peripheral stalk. During catalysis, ATP synthesis in the catalytic domain of F(1) is coupled via a rotary mechanism of the central stalk subunits to proton translocation. Functionally, this protein is part of the stalk that links CF(0) to CF(1). It either transmits conformational changes from CF(0) to CF(1) or is implicated in proton conduction. The chain is ATP synthase subunit delta from Cupriavidus pinatubonensis (strain JMP 134 / LMG 1197) (Cupriavidus necator (strain JMP 134)).